A 295-amino-acid polypeptide reads, in one-letter code: Tyrosine recombinase XerC (295 aa).

A Core-binding (CB) domain is found at 1-85 (MLTALNRYWD…ALRRFLSFLV (85 aa)). The region spanning 106–285 (HLPKNMDGEQ…NFQHLAEVYD (180 aa)) is the Tyr recombinase domain. Active-site residues include arginine 145, lysine 169, histidine 237, arginine 240, and histidine 263. The active-site O-(3'-phospho-DNA)-tyrosine intermediate is tyrosine 272.

This sequence belongs to the 'phage' integrase family. XerC subfamily. As to quaternary structure, forms a cyclic heterotetrameric complex composed of two molecules of XerC and two molecules of XerD.

The protein resides in the cytoplasm. In terms of biological role, site-specific tyrosine recombinase, which acts by catalyzing the cutting and rejoining of the recombining DNA molecules. The XerC-XerD complex is essential to convert dimers of the bacterial chromosome into monomers to permit their segregation at cell division. It also contributes to the segregational stability of plasmids. The sequence is that of Tyrosine recombinase XerC from Haemophilus influenzae (strain PittEE).